We begin with the raw amino-acid sequence, 244 residues long: NAD(P)H-quinone oxidoreductase subunit K (244 aa).

The [4Fe-4S] cluster site is built by cysteine 51, cysteine 52, cysteine 116, and cysteine 147.

This sequence belongs to the complex I 20 kDa subunit family. As to quaternary structure, NDH-1 can be composed of about 15 different subunits; different subcomplexes with different compositions have been identified which probably have different functions. [4Fe-4S] cluster serves as cofactor.

It is found in the cellular thylakoid membrane. The catalysed reaction is a plastoquinone + NADH + (n+1) H(+)(in) = a plastoquinol + NAD(+) + n H(+)(out). It carries out the reaction a plastoquinone + NADPH + (n+1) H(+)(in) = a plastoquinol + NADP(+) + n H(+)(out). NDH-1 shuttles electrons from an unknown electron donor, via FMN and iron-sulfur (Fe-S) centers, to quinones in the respiratory and/or the photosynthetic chain. The immediate electron acceptor for the enzyme in this species is believed to be plastoquinone. Couples the redox reaction to proton translocation, and thus conserves the redox energy in a proton gradient. Cyanobacterial NDH-1 also plays a role in inorganic carbon-concentration. The polypeptide is NAD(P)H-quinone oxidoreductase subunit K (Synechococcus sp. (strain JA-3-3Ab) (Cyanobacteria bacterium Yellowstone A-Prime)).